Reading from the N-terminus, the 338-residue chain is Mitoferrin-1 (338 aa).

The tract at residues 1 to 37 (MELRRGGVGSQAAGRRMDGDCRDGGCGSKDAGSEDYE) is disordered. Solcar repeat units lie at residues 43 to 131 (ASVS…MKRT), 141 to 225 (NSHL…LQEQ), and 232 to 326 (YNPQ…FKYF). 6 helical membrane-spanning segments follow: residues 45–64 (VSTHMTAGAMAGILEHSIMY), 106–125 (GLNVMMMGAGPAHAMYFACY), 143–162 (HLANGIAGSMATLLHDAVMN), 200–219 (SYTTQLTMNIPFQSIHFITY), 234–253 (PQSHIISGGLAGALAAAATT), and 301–320 (GIQARVIYQMPSTAISWSVY).

The protein belongs to the mitochondrial carrier (TC 2.A.29) family. In terms of assembly, interacts with ACB10; this interaction stabilizes SLC25A37 and enhances the function of SLC25A37 to import mitochondrial iron during erythroid differentiation.

Its subcellular location is the mitochondrion inner membrane. The catalysed reaction is Fe(2+)(in) = Fe(2+)(out). In terms of biological role, mitochondrial iron transporter that specifically mediates iron uptake in developing erythroid cells, thereby playing an essential role in heme biosynthesis. This chain is Mitoferrin-1 (Slc25a37), found in Rattus norvegicus (Rat).